Here is a 1414-residue protein sequence, read N- to C-terminus: DNA-directed RNA polymerase subunit beta' (1414 aa).

Positions 72, 74, 87, and 90 each coordinate Zn(2+). Residues Asp-463, Asp-465, and Asp-467 each coordinate Mg(2+). Cys-811, Cys-885, Cys-892, and Cys-895 together coordinate Zn(2+).

This sequence belongs to the RNA polymerase beta' chain family. The RNAP catalytic core consists of 2 alpha, 1 beta, 1 beta' and 1 omega subunit. When a sigma factor is associated with the core the holoenzyme is formed, which can initiate transcription. Requires Mg(2+) as cofactor. It depends on Zn(2+) as a cofactor.

It carries out the reaction RNA(n) + a ribonucleoside 5'-triphosphate = RNA(n+1) + diphosphate. In terms of biological role, DNA-dependent RNA polymerase catalyzes the transcription of DNA into RNA using the four ribonucleoside triphosphates as substrates. The polypeptide is DNA-directed RNA polymerase subunit beta' (Roseobacter denitrificans (strain ATCC 33942 / OCh 114) (Erythrobacter sp. (strain OCh 114))).